The sequence spans 292 residues: Elongation factor Ts (292 aa).

The segment at threonine 82–valine 85 is involved in Mg(2+) ion dislocation from EF-Tu.

The protein belongs to the EF-Ts family.

The protein localises to the cytoplasm. Its function is as follows. Associates with the EF-Tu.GDP complex and induces the exchange of GDP to GTP. It remains bound to the aminoacyl-tRNA.EF-Tu.GTP complex up to the GTP hydrolysis stage on the ribosome. The protein is Elongation factor Ts of Legionella pneumophila (strain Lens).